Reading from the N-terminus, the 171-residue chain is Small ribosomal subunit protein uS5 (171 aa).

The S5 DRBM domain maps to 14 to 77; that stretch reads LKEKLVMVNR…EKAKKKLLKI (64 aa).

It belongs to the universal ribosomal protein uS5 family. In terms of assembly, part of the 30S ribosomal subunit. Contacts proteins S4 and S8.

In terms of biological role, with S4 and S12 plays an important role in translational accuracy. Its function is as follows. Located at the back of the 30S subunit body where it stabilizes the conformation of the head with respect to the body. In Karelsulcia muelleri (strain GWSS) (Sulcia muelleri), this protein is Small ribosomal subunit protein uS5.